The chain runs to 746 residues: Serine/threonine-protein kinase SMU1 (746 aa).

2 disordered regions span residues 1 to 138 and 155 to 212; these read MSLV…DTLH and QRSH…GSRN. Low complexity-rich tracts occupy residues 15 to 54 and 85 to 105; these read SSANRAASSLAFQPASTSNSASPTSSSTSTFANGSSSSTT and SVSSLSNNPPAASPITAPSSA. Composition is skewed to polar residues over residues 106–121, 128–138, and 156–176; these read LPWSSQNPAASGSTAT, RSNTAGPDTLH, and RSHSSIAAHQASPSLNQSSPT. Residues 194–203 are compositionally biased toward basic and acidic residues; it reads PSRDRERSRD. A CRIB domain is found at 237 to 250; the sequence is ISTPYDPVHLTHVG. The disordered stretch occupies residues 301 to 451; sequence GGSDVWKKMG…RRETKKSTIK (151 aa). Over residues 370 to 380 the composition is skewed to polar residues; the sequence is PPSNASTSSAD. Low complexity predominate over residues 414 to 430; the sequence is SPASRAPDAPAAVSAAS. Positions 472-723 constitute a Protein kinase domain; sequence YRSLQKIGQG…ALGMLAHPFL (252 aa). ATP contacts are provided by residues 478-486 and Lys501; that span reads IGQGASGGV. Residue Asp591 is the Proton acceptor of the active site.

The protein belongs to the protein kinase superfamily. STE Ser/Thr protein kinase family. STE20 subfamily.

It is found in the cytoplasm. It localises to the nucleus. It catalyses the reaction L-seryl-[protein] + ATP = O-phospho-L-seryl-[protein] + ADP + H(+). The enzyme catalyses L-threonyl-[protein] + ATP = O-phospho-L-threonyl-[protein] + ADP + H(+). In terms of biological role, MAP4K component of the MAPK pathway required for the mating pheromone response and the regulation of cell polarity and cell cycle. Phosphorylates histone H2B to form H2BS10ph. This chain is Serine/threonine-protein kinase SMU1 (SMU1), found in Mycosarcoma maydis (Corn smut fungus).